We begin with the raw amino-acid sequence, 100 residues long: Small ribosomal subunit protein uS14c (100 aa).

The segment at 1 to 31 (MARKSLIQREKKRQKLEQKYHSIRRSSKKEI) is disordered.

This sequence belongs to the universal ribosomal protein uS14 family. As to quaternary structure, part of the 30S ribosomal subunit.

The protein localises to the plastid. Its subcellular location is the chloroplast. Functionally, binds 16S rRNA, required for the assembly of 30S particles. The chain is Small ribosomal subunit protein uS14c from Nicotiana tomentosiformis (Tobacco).